A 313-amino-acid chain; its full sequence is MNATERPGSDGTGSPESVGSRLKNLLHGPGTCQLMGVHDGLSARIAVAEGFEALWASGLCMSTARGVRDSDEASWTELLTLVGTMTEAAPGAPVLVDGDTGYGNFNTARPSPPAPSCLGAAGVCFEDKVFPKMNSFFGDGHQLAPIGEFSGKIKACKDTQRDPGFVVVARTEALISNLPMEEALTRAHAYVEAVADGLFIHSRMSTPQQIAEFMRQWDGSAPILIAPTTYHRPSLDDFAALGIAGCIWANHSMRAAFSAMRDVCQQIRADRGIFGVEERVAPLKEIFGLLDYESLEQDENRYTQAPDLAPVQG.

The segment at 1-23 (MNATERPGSDGTGSPESVGSRLK) is disordered. Asp-69 (nucleophile) is an active-site residue.

This sequence belongs to the isocitrate lyase/PEP mutase superfamily. PEP mutase family.

It carries out the reaction phosphoenolpyruvate + H(+) = 3-phosphonopyruvate. It participates in secondary metabolite biosynthesis; bialaphos biosynthesis. Its function is as follows. Formation of a carbon-phosphorus bond by converting phosphoenolpyruvate (PEP) to phosphonopyruvate (P-Pyr). The polypeptide is Phosphoenolpyruvate phosphomutase (ppm) (Streptomyces viridochromogenes (strain DSM 40736 / JCM 4977 / BCRC 1201 / Tue 494)).